We begin with the raw amino-acid sequence, 419 residues long: S-adenosylmethionine synthase (419 aa).

Position 14 (histidine 14) interacts with ATP. Aspartate 16 is a binding site for Mg(2+). Glutamate 42 lines the K(+) pocket. Glutamate 55 and glutamine 98 together coordinate L-methionine. A flexible loop region spans residues 98–108; the sequence is QSQDIYQGVDR. ATP is bound by residues 164–166, 242–243, aspartate 251, 257–258, alanine 274, and lysine 278; these read DSK, KF, and RK. Aspartate 251 serves as a coordination point for L-methionine. Lysine 282 contributes to the L-methionine binding site.

The protein belongs to the AdoMet synthase family. As to quaternary structure, homotetramer; dimer of dimers. Mg(2+) is required as a cofactor. The cofactor is K(+).

It localises to the cytoplasm. It catalyses the reaction L-methionine + ATP + H2O = S-adenosyl-L-methionine + phosphate + diphosphate. It participates in amino-acid biosynthesis; S-adenosyl-L-methionine biosynthesis; S-adenosyl-L-methionine from L-methionine: step 1/1. In terms of biological role, catalyzes the formation of S-adenosylmethionine (AdoMet) from methionine and ATP. The overall synthetic reaction is composed of two sequential steps, AdoMet formation and the subsequent tripolyphosphate hydrolysis which occurs prior to release of AdoMet from the enzyme. In Christiangramia forsetii (strain DSM 17595 / CGMCC 1.15422 / KT0803) (Gramella forsetii), this protein is S-adenosylmethionine synthase.